The following is a 299-amino-acid chain: Non-structural protein NS-S (299 aa).

The interval 66–69 (PNNP) is involved in inclusion bodies formation. The interval 148–220 (FEGDMVIDSC…KPLLDSLYFA (73 aa)) is interaction with host TNIP2.

It belongs to the Bandavirus NS-S protein family. Interacts with host TBK1; this interaction antagonizes TBK1 phosphorylation and inhibits TBK1-IRF3 interaction. Interacts with host STAT2; this interaction blocks the nuclear translocation and activation of host STAT2. Interacts with host TNIP2.

Its subcellular location is the host cytoplasm. Functionally, plays a role in the inhibition of host RLR-induced interferon-beta activation by inhibiting the phosphorylation of TANK-binding kinase 1/TBK1, thereby blocking IRF3 activation and preventing the establishment of an antiviral state. Also blocks IFN-triggered nuclear translocation and activation of host STAT2. The chain is Non-structural protein NS-S (NSS) from Alces americanus (American moose).